Reading from the N-terminus, the 1427-residue chain is Protein NPAT (1427 aa).

Residues 1 to 318 (MLLPSDVARL…EEAIQDILEQ (318 aa)) form an interaction with MIZF region. The LisH domain maps to 3–35 (LPSDVARLVLGYLQQENLISTCQTFILESSDLK). Required for activation of histone gene transcription and interaction with MIZF stretches follow at residues 5 to 25 (SDVARLVLGYLQQENLISTCQ) and 121 to 145 (KRQRKLASQTAPASAELLTLPYLSG). Residues 199 to 231 (KKAHASLMSPGRRKSESQRKSTTLSGPHSTIRN) are disordered. Position 207 is a phosphoserine (Ser-207). The span at 218-231 (KSTTLSGPHSTIRN) shows a compositional bias: polar residues. A mediates transcriptional activation region spans residues 262-338 (KLAENINKFL…FDLFDYGKTK (77 aa)). A phosphoserine mark is found at Ser-554 and Ser-599. Positions 628-644 (SLSSTKQPSNDSASVEL) are enriched in polar residues. Disordered regions lie at residues 628–669 (SLSS…VKEE) and 683–732 (EKVA…SAEI). Residues 629 to 653 (LSSTKQPSNDSASVELNHTENEAQA) form a required for acceleration of G1 phase region. Over residues 654-665 (SKSENSQEPSSS) the composition is skewed to low complexity. The span at 695–711 (VENSHSLPPESVCSSVG) shows a compositional bias: polar residues. Phosphoserine; by CDK2 is present on residues Ser-775 and Ser-779. Required for acceleration of G1 phase stretches follow at residues 828 to 853 (QNEDGIAFSANVTPCVSKDGGYIQLM) and 1039 to 1054 (KSEETTVPFPEESIVP). 2 disordered regions span residues 1095-1121 (FPNLDSPNVSSTLKPPSNNAIKREKEK) and 1133-1152 (SAISRHTTIRETQSEKKVSP). Residues 1097 to 1114 (NLDSPNVSSTLKPPSNNA) are compositionally biased toward polar residues. Ser-1100 is subject to Phosphoserine; by CDK2. Glycyl lysine isopeptide (Lys-Gly) (interchain with G-Cter in SUMO2) cross-links involve residues Lys-1116 and Lys-1149. Residues 1140–1151 (TIRETQSEKKVS) are compositionally biased toward basic and acidic residues. Phosphoserine occurs at positions 1151 and 1200. Lys-1228 is subject to N6-acetyllysine. The interval 1228-1252 (KDLKQEQTKSASSLITTEMLQDIQR) is required for acceleration of G1 phase. Disordered stretches follow at residues 1253–1327 (HSSV…SENS) and 1348–1413 (SATP…FPAG). The residue at position 1254 (Ser-1254) is a Phosphoserine. Residue Thr-1270 is modified to Phosphothreonine; by CDK2. Over residues 1276-1285 (GEKHKEEPID) the composition is skewed to basic and acidic residues. Lys-1280 is covalently cross-linked (Glycyl lysine isopeptide (Lys-Gly) (interchain with G-Cter in SUMO2)). The interval 1325–1349 (ENSVNMAAHTLMILSRAAISRTTSA) is required for acceleration of G1 phase. Residues 1348–1365 (SATPLKDNTQQFRASSRS) show a composition bias toward polar residues. Phosphothreonine; by CDK2 is present on Thr-1350. Basic and acidic residues predominate over residues 1371–1382 (KIEELDERERNS). Residues 1383–1394 (RPSSKNLTNSSI) are compositionally biased toward polar residues. The segment covering 1396 to 1406 (MKKKKIKKKKL) has biased composition (basic residues).

This sequence belongs to the NPAT family. As to quaternary structure, interacts with the cylin/CDK complexes CCNE1/CDK2 and CCNA1/CDK2. Interacts with BZW1, CASP8AP2, CREBBP, MIZF and YY1. Interacts with the RUVBL1, RUVBL2 and TRRAP subunits of the NuA4 complex. May also interact with GAPDH, NME1, NME2 and STIP1. Phosphorylated at Ser-775, Ser-779, Ser-1100, Thr-1270 and Thr-1350 by CCNE1/CDK2 at G1-S transition and until prophase, which promotes association with histone gene clusters and stimulates activation of histone transcription. Also phosphorylated by CCNA1/CDK2 in vitro. Ubiquitously expressed.

It localises to the nucleus. The protein localises to the cajal body. Functionally, required for progression through the G1 and S phases of the cell cycle and for S phase entry. Activates transcription of the histone H2A, histone H2B, histone H3 and histone H4 genes in conjunction with MIZF. Also positively regulates the ATM, MIZF and PRKDC promoters. Transcriptional activation may be accomplished at least in part by the recruitment of the NuA4 histone acetyltransferase (HAT) complex to target gene promoters. The protein is Protein NPAT (NPAT) of Homo sapiens (Human).